A 212-amino-acid chain; its full sequence is Outer-membrane lipoprotein LolB (212 aa).

Positions 1–16 (MACRSWVLGILLVLVG) are cleaved as a signal peptide. Cys17 is lipidated: N-palmitoyl cysteine. Residue Cys17 is the site of S-diacylglycerol cysteine attachment.

Belongs to the LolB family. Monomer.

The protein resides in the cell outer membrane. In terms of biological role, plays a critical role in the incorporation of lipoproteins in the outer membrane after they are released by the LolA protein. In Nitrosomonas europaea (strain ATCC 19718 / CIP 103999 / KCTC 2705 / NBRC 14298), this protein is Outer-membrane lipoprotein LolB.